The following is a 175-amino-acid chain: Shikimate kinase (175 aa).

An ATP-binding site is contributed by 14 to 19 (GAGKST). S18 lines the Mg(2+) pocket. Positions 36, 60, and 82 each coordinate substrate. Residue R120 coordinates ATP. R140 contacts substrate. Q157 contacts ATP.

Belongs to the shikimate kinase family. Monomer. Requires Mg(2+) as cofactor.

Its subcellular location is the cytoplasm. It catalyses the reaction shikimate + ATP = 3-phosphoshikimate + ADP + H(+). It participates in metabolic intermediate biosynthesis; chorismate biosynthesis; chorismate from D-erythrose 4-phosphate and phosphoenolpyruvate: step 5/7. Functionally, catalyzes the specific phosphorylation of the 3-hydroxyl group of shikimic acid using ATP as a cosubstrate. The protein is Shikimate kinase of Histophilus somni (strain 2336) (Haemophilus somnus).